A 569-amino-acid chain; its full sequence is Sulfite reductase [NADPH] hemoprotein beta-component (569 aa).

4 residues coordinate [4Fe-4S] cluster: C433, C439, C478, and C482. C482 contacts siroheme.

Belongs to the nitrite and sulfite reductase 4Fe-4S domain family. In terms of assembly, alpha(8)-beta(8). The alpha component is a flavoprotein, the beta component is a hemoprotein. The cofactor is siroheme. Requires [4Fe-4S] cluster as cofactor.

It catalyses the reaction hydrogen sulfide + 3 NADP(+) + 3 H2O = sulfite + 3 NADPH + 4 H(+). The protein operates within sulfur metabolism; hydrogen sulfide biosynthesis; hydrogen sulfide from sulfite (NADPH route): step 1/1. Its function is as follows. Component of the sulfite reductase complex that catalyzes the 6-electron reduction of sulfite to sulfide. This is one of several activities required for the biosynthesis of L-cysteine from sulfate. This Buchnera aphidicola subsp. Acyrthosiphon pisum (strain 5A) protein is Sulfite reductase [NADPH] hemoprotein beta-component.